Here is a 285-residue protein sequence, read N- to C-terminus: 2-dehydro-3-deoxyphosphooctonate aldolase (285 aa).

Belongs to the KdsA family.

It is found in the cytoplasm. The enzyme catalyses D-arabinose 5-phosphate + phosphoenolpyruvate + H2O = 3-deoxy-alpha-D-manno-2-octulosonate-8-phosphate + phosphate. Its pathway is carbohydrate biosynthesis; 3-deoxy-D-manno-octulosonate biosynthesis; 3-deoxy-D-manno-octulosonate from D-ribulose 5-phosphate: step 2/3. It participates in bacterial outer membrane biogenesis; lipopolysaccharide biosynthesis. This Polaromonas naphthalenivorans (strain CJ2) protein is 2-dehydro-3-deoxyphosphooctonate aldolase.